Here is a 102-residue protein sequence, read N- to C-terminus: uncharacterized protein (102 aa).

This is an uncharacterized protein from Sulfolobus spindle-shape virus 1 (SSV1).